Here is a 108-residue protein sequence, read N- to C-terminus: Integration host factor subunit alpha (108 aa).

The protein belongs to the bacterial histone-like protein family. As to quaternary structure, heterodimer of an alpha and a beta chain.

Its function is as follows. This protein is one of the two subunits of integration host factor, a specific DNA-binding protein that functions in genetic recombination as well as in transcriptional and translational control. The chain is Integration host factor subunit alpha from Rhodopseudomonas palustris (strain BisB18).